We begin with the raw amino-acid sequence, 189 residues long: Elongation factor P (189 aa).

It belongs to the elongation factor P family.

It localises to the cytoplasm. It participates in protein biosynthesis; polypeptide chain elongation. Functionally, involved in peptide bond synthesis. Stimulates efficient translation and peptide-bond synthesis on native or reconstituted 70S ribosomes in vitro. Probably functions indirectly by altering the affinity of the ribosome for aminoacyl-tRNA, thus increasing their reactivity as acceptors for peptidyl transferase. The protein is Elongation factor P of Rhizobium rhizogenes (strain K84 / ATCC BAA-868) (Agrobacterium radiobacter).